The chain runs to 517 residues: Diacylglycerol O-acyltransferase 1C (517 aa).

A disordered region spans residues 1–82 (MAISDVPAAA…NVGAAANDAG (82 aa)). A compositionally biased stretch (low complexity) spans 8 to 17 (AAAGTTATTT). The span at 53-64 (ITDDDNIKDHKP) shows a compositional bias: basic and acidic residues. Residues 71 to 81 (DDNVGAAANDA) show a composition bias toward low complexity. Transmembrane regions (helical) follow at residues 121–141 (HAGLFNLCIVVLVAVNSRLII), 165–185 (WPLFMCCLSLAIFPLAAFVVE), 197–217 (VVVLLHLIISTVELCYPVLVI), 222–242 (SAFVSGVTLMLLTCIVWLKLV), 272–292 (YPYTVTFRSLAYFMVAPTLCY), 305–325 (GWVFRQLVKLIIFTGVMGFII), and 361–381 (VWLCMFYCFFHLWLNILAELV). An FYXDWWN motif motif is present at residues 388 to 394 (FYKDWWN). 3 consecutive transmembrane segments (helical) span residues 429–449 (GAASLIAFLVSAVFHELCIAV), 451–471 (CHMFKLWAFIGIMFQVPLVLI), and 484–504 (VGNMIFWFIFCILGQPMSVLL). The active site involves histidine 443.

Belongs to the membrane-bound acyltransferase family. Sterol o-acyltransferase subfamily.

The protein resides in the endoplasmic reticulum membrane. The enzyme catalyses an acyl-CoA + a 1,2-diacyl-sn-glycerol = a triacyl-sn-glycerol + CoA. It functions in the pathway glycerolipid metabolism; triacylglycerol biosynthesis. Its function is as follows. Involved in triacylglycerol (TAG) synthesis. Catalyzes the acylation of the sn-3 hydroxy group of sn-1,2-diacylglycerol using acyl-CoA. The polypeptide is Diacylglycerol O-acyltransferase 1C (Glycine max (Soybean)).